The sequence spans 152 residues: Snaclec lebecin subunit alpha (152 aa).

An N-terminal signal peptide occupies residues 1–23; that stretch reads MGRSISVSFGLLVVFLSLSGTGA. 3 disulfide bridges follow: Cys27-Cys38, Cys54-Cys147, and Cys122-Cys139. Residues 34-148 form the C-type lectin domain; that stretch reads YEGGCYYVFD…CELAYHFICS (115 aa).

As to quaternary structure, heterodimer with the beta subunit (AC W5XCJ6); disulfide-linked. As to expression, expressed by the venom gland.

Its subcellular location is the secreted. Its function is as follows. Inhibits human breast cancer cells (MDA-MB231) migration and proliferation, as well as their adhesion to fibrinogen and fibronectin. This inhibition may be due to the binding to receptors of the integrin family, probably alpha-v/beta-3 (ITGAV/ITGB3) (40% inhibition of cell adhesion) and alpha-5/beta-1 (ITGA5/ITGB1) (by comparison with lebectin). In Macrovipera lebetinus (Levantine viper), this protein is Snaclec lebecin subunit alpha.